The following is a 430-amino-acid chain: Crotonyl-CoA carboxylase/reductase (430 aa).

This sequence belongs to the zinc-containing alcohol dehydrogenase family. Crotonyl-CoA carboxylase/reductase subfamily. In terms of assembly, homodimer. Despite some sequence similarity to zinc-containing alcohol dehydrogenases, this enzyme does not bind any metals. is required as a cofactor.

It catalyses the reaction (2S)-ethylmalonyl-CoA + NADP(+) = (2E)-butenoyl-CoA + CO2 + NADPH. It carries out the reaction (S)-methylmalonyl-CoA + NADP(+) = acryloyl-CoA + CO2 + NADPH. The catalysed reaction is butanoyl-CoA + NADP(+) = (2E)-butenoyl-CoA + NADPH + H(+). Catalyzes the NADPH-dependent reductive carboxylation of crotonyl-CoA ((2E)-butenoyl-CoA) to (2S)-ethylmalonyl-CoA, in the presence of CO2. This is a key reaction in the ethylmalonyl-CoA pathway for acetyl-CoA assimilation required for R.sphaeroides growth on acetate as sole carbon source. Is also able to accept acryloyl-CoA as an alternative substrate, yielding (2S)-methylmalonyl-CoA. To a lesser extent, when CO2 is absent, the enzyme also catalyzes the reduction of crotonyl-CoA to butanoyl-CoA. In Cereibacter sphaeroides (strain ATCC 17023 / DSM 158 / JCM 6121 / CCUG 31486 / LMG 2827 / NBRC 12203 / NCIMB 8253 / ATH 2.4.1.) (Rhodobacter sphaeroides), this protein is Crotonyl-CoA carboxylase/reductase.